A 1008-amino-acid polypeptide reads, in one-letter code: Serine/threonine-protein kinase PRP4 homolog (1008 aa).

The disordered stretch occupies residues 1 to 103; the sequence is MAAAEAPSLR…PAKRTKLDDL (103 aa). Position 2 is an N-acetylalanine (A2). A phosphoserine mark is found at S8, S20, S23, and S32. Basic residues-rich tracts occupy residues 39-59 and 67-81; these read KHSRHKKKKHKHRSKHKKHKH and RKHKHKHKHKKHKRK. Residues 82 to 91 show a composition bias toward basic and acidic residues; the sequence is EVADASDKEG. Phosphoserine occurs at positions 87 and 93. N6-acetyllysine; alternate is present on K99. A Glycyl lysine isopeptide (Lys-Gly) (interchain with G-Cter in SUMO2); alternate cross-link involves residue K99. A Glycyl lysine isopeptide (Lys-Gly) (interchain with G-Cter in SUMO2) cross-link involves residue K111. A Glycyl lysine isopeptide (Lys-Gly) (interchain with G-Cter in SUMO2); alternate cross-link involves residue K117. A Glycyl lysine isopeptide (Lys-Gly) (interchain with G-Cter in SUMO1); alternate cross-link involves residue K117. Phosphoserine is present on S131. A Phosphotyrosine modification is found at Y140. Disordered regions lie at residues 140 to 536 and 560 to 584; these read YESG…EDEE and SNLSVPSEPSSPQSSTRSRSPSPDD. Residues S142, S144, and S166 each carry the phosphoserine modification. The span at 157 to 168 shows a compositional bias: low complexity; the sequence is GNRSSTRSSSTK. Glycyl lysine isopeptide (Lys-Gly) (interchain with G-Cter in SUMO2) cross-links involve residues K170 and K177. Basic residues-rich tracts occupy residues 179–202 and 214–230; these read STKKRSKSRSKERTRHRSDKKKSK and RSKSKERKKSKSPSKRS. A phosphoserine mark is found at S239, S241, S257, S277, S283, S292, and S294. The segment covering 247-270 has biased composition (basic and acidic residues); the sequence is RSQEKVGKARSPVDDKAKVEDKSK. Over residues 302 to 315 the composition is skewed to basic residues; the sequence is SKDRRSRSKERKSK. Residues 316-325 are compositionally biased toward basic and acidic residues; it reads RPEADKEKKP. 5 positions are modified to phosphoserine: S328, S354, S356, S366, and S368. A compositionally biased stretch (basic residues) spans 342-367; it reads PSRRPGRSPKRRSLSPKQRDKSRRSR. A Phosphothreonine modification is found at T385. S387 is subject to Phosphoserine. Basic and acidic residues-rich tracts occupy residues 395 to 408 and 415 to 429; these read RSLERKRREPERRR and RPRDDILSRRERSKD. Phosphoserine is present on residues S427, S431, and S437. Positions 438-498 are enriched in basic residues; that stretch reads PARRRASRSP…RGGRRRRSRS (61 aa). Phosphoserine is present on residues S519, S520, S521, S566, S570, S577, S579, and S581. Residues 519–536 show a composition bias toward acidic residues; it reads SSSDDNLEDFDVEEEDEE. The span at 563–582 shows a compositional bias: low complexity; the sequence is SVPSEPSSPQSSTRSRSPSP. Residues K594 and K660 each participate in a glycyl lysine isopeptide (Lys-Gly) (interchain with G-Cter in SUMO2) cross-link. In terms of domain architecture, Protein kinase spans 688–1004; sequence YNVYGYTGQG…INQALQHAFI (317 aa). ATP is bound by residues 694–702 and K718; that span reads TGQGVFSNV. K718 carries the post-translational modification N6-acetyllysine. D816 (proton acceptor) is an active-site residue. Y850 carries the post-translational modification Phosphotyrosine. S853 bears the Phosphoserine mark.

Belongs to the protein kinase superfamily. CMGC Ser/Thr protein kinase family. Interacts with CLK1 C-terminus. Associates with the U5 snRNP and NCOR1 deacetylase complexes. Identified in the spliceosome C complex. Phosphorylated by CLK1. Autophosphorylated; phosphorylation inhibits interaction with its targets, such as PRPF6 or SMARCA4.

It is found in the nucleus. It localises to the chromosome. The protein localises to the centromere. Its subcellular location is the kinetochore. It carries out the reaction L-seryl-[protein] + ATP = O-phospho-L-seryl-[protein] + ADP + H(+). The enzyme catalyses L-threonyl-[protein] + ATP = O-phospho-L-threonyl-[protein] + ADP + H(+). Serine/threonine kinase involved in spliceosomal assembly as well as mitosis and signaling regulation. Connects chromatin mediated regulation of transcription and pre-mRNA splicing. During spliceosomal assembly, interacts with and phosphorylates PRPF6 and PRPF31, components of the U4/U6-U5 tri-small nuclear ribonucleoprotein (snRNP), to facilitate the formation of the spliceosome B complex. Plays a role in regulating transcription and the spindle assembly checkpoint (SAC). Associates with U5 snRNP and NCOR1 deacetylase complexes which may allow a coordination of pre-mRNA splicing with chromatin remodeling events involved in transcriptional regulation. Associates and probably phosphorylates SMARCA4 and NCOR1. Phosphorylates SRSF1. Associates with kinetochores during mitosis and is necessary for recruitment and maintenance of the checkpoint proteins such as MAD1L1 and MAD12L1 at the kinetochores. Phosphorylates and regulates the activity of the transcription factors such as ELK1 and KLF13. Phosphorylates nuclear YAP1 and WWTR1/TAZ which induces nuclear exclusion and regulates Hippo signaling pathway, involved in tissue growth control. In Bos taurus (Bovine), this protein is Serine/threonine-protein kinase PRP4 homolog (PRP4K).